The chain runs to 154 residues: UPF0547 protein C16orf87 homolog (154 aa).

Residues 46–119 (HPEKAPSSTE…KHEEEREKQE (74 aa)) are disordered. Over residues 68-84 (VRREKINSTVNKDLENR) the composition is skewed to basic and acidic residues. Position 91 is a phosphoserine (serine 91). Residues 104-132 (KSASAKKHEEEREKQEKEIDIYANLSDEK) adopt a coiled-coil conformation. Positions 109–119 (KKHEEEREKQE) are enriched in basic and acidic residues.

This sequence belongs to the UPF0547 family.

The polypeptide is UPF0547 protein C16orf87 homolog (Bos taurus (Bovine)).